Consider the following 455-residue polypeptide: Tyramine receptor Ser-2 (455 aa).

The Extracellular segment spans residues Met1–Gly60. N-linked (GlcNAc...) asparagine glycans are attached at residues Asn4 and Asn26. A helical transmembrane segment spans residues Thr61 to Phe83. Over Ser84–Asn93 the chain is Cytoplasmic. The helical transmembrane segment at Tyr94–Val115 threads the bilayer. The Extracellular segment spans residues Val116–Phe133. Residues Cys131 and Cys209 are joined by a disulfide bond. Residues Phe134–Leu154 form a helical membrane-spanning segment. The Cytoplasmic segment spans residues Asp155–Phe174. Residues Val175–Trp197 form a helical membrane-spanning segment. Residues Asn198–Ser221 are Extracellular-facing. The chain crosses the membrane as a helical span at residues Ala222–Ser243. Residues Ala244–Thr370 lie on the Cytoplasmic side of the membrane. The helical transmembrane segment at Ile371 to Arg392 threads the bilayer. Residues Pro393–Ala407 are Extracellular-facing. Residues Phe408 to Leu428 form a helical membrane-spanning segment. Topologically, residues Glu429–Pro455 are cytoplasmic.

Belongs to the G-protein coupled receptor 1 family. In terms of tissue distribution, the different isoforms are expressed in specific, but overlapping sets of sensory, inter- and motor neurons, including AIY, AIZ and RIA interneurons. They are also expressed in pharyngeal cells, head muscles and excretory gland cells.

It localises to the cell membrane. G-protein coupled receptor for tyramine, a known neurotransmitter and neuromodulator and direct precursor of octopamine. The rank order of potency is tyramine &gt; octopamine &gt; dopamine &gt; serotonin &gt; epinephrine = norepinephrine. The sequence is that of Tyramine receptor Ser-2 (ser-2) from Caenorhabditis elegans.